Consider the following 463-residue polypeptide: Mitochondrial distribution and morphology protein 10 (463 aa).

This sequence belongs to the MDM10 family. Component of the ER-mitochondria encounter structure (ERMES) or MDM complex, composed of MMM1, MDM10, MDM12 and MDM34. Associates with the mitochondrial outer membrane sorting assembly machinery SAM(core) complex.

Its subcellular location is the mitochondrion outer membrane. In terms of biological role, component of the ERMES/MDM complex, which serves as a molecular tether to connect the endoplasmic reticulum and mitochondria. Components of this complex are involved in the control of mitochondrial shape and protein biogenesis and may function in phospholipid exchange. MDM10 is involved in the late assembly steps of the general translocase of the mitochondrial outer membrane (TOM complex). Functions in the TOM40-specific route of the assembly of outer membrane beta-barrel proteins, including the association of TOM40 with the receptor TOM22 and small TOM proteins. Can associate with the SAM(core) complex as well as the MDM12-MMM1 complex, both involved in late steps of the major beta-barrel assembly pathway, that is responsible for biogenesis of all outer membrane beta-barrel proteins. May act as a switch that shuttles between both complexes and channels precursor proteins into the TOM40-specific pathway. Plays a role in mitochondrial morphology and in the inheritance of mitochondria. The sequence is that of Mitochondrial distribution and morphology protein 10 from Candida dubliniensis (strain CD36 / ATCC MYA-646 / CBS 7987 / NCPF 3949 / NRRL Y-17841) (Yeast).